A 76-amino-acid chain; its full sequence is Large ribosomal subunit protein bL31 (76 aa).

The protein belongs to the bacterial ribosomal protein bL31 family. Type A subfamily. In terms of assembly, part of the 50S ribosomal subunit.

Binds the 23S rRNA. The chain is Large ribosomal subunit protein bL31 from Beijerinckia indica subsp. indica (strain ATCC 9039 / DSM 1715 / NCIMB 8712).